The sequence spans 379 residues: Cobalt-precorrin-5B C(1)-methyltransferase (379 aa).

It belongs to the CbiD family.

The enzyme catalyses Co-precorrin-5B + S-adenosyl-L-methionine = Co-precorrin-6A + S-adenosyl-L-homocysteine. It participates in cofactor biosynthesis; adenosylcobalamin biosynthesis; cob(II)yrinate a,c-diamide from sirohydrochlorin (anaerobic route): step 6/10. Functionally, catalyzes the methylation of C-1 in cobalt-precorrin-5B to form cobalt-precorrin-6A. This chain is Cobalt-precorrin-5B C(1)-methyltransferase, found in Klebsiella pneumoniae subsp. pneumoniae (strain ATCC 700721 / MGH 78578).